The chain runs to 283 residues: Elongation factor Ts (283 aa).

The segment at 79–82 (TDFV) is involved in Mg(2+) ion dislocation from EF-Tu.

Belongs to the EF-Ts family.

The protein resides in the cytoplasm. Associates with the EF-Tu.GDP complex and induces the exchange of GDP to GTP. It remains bound to the aminoacyl-tRNA.EF-Tu.GTP complex up to the GTP hydrolysis stage on the ribosome. The polypeptide is Elongation factor Ts (Shewanella putrefaciens (strain CN-32 / ATCC BAA-453)).